A 536-amino-acid polypeptide reads, in one-letter code: Probable cytochrome P450 12a5, mitochondrial (536 aa).

C482 lines the heme pocket.

Belongs to the cytochrome P450 family. It depends on heme as a cofactor.

The protein localises to the mitochondrion membrane. The sequence is that of Probable cytochrome P450 12a5, mitochondrial (Cyp12a5) from Drosophila melanogaster (Fruit fly).